A 421-amino-acid polypeptide reads, in one-letter code: NAD-specific glutamate dehydrogenase (421 aa).

Substrate is bound by residues Lys-71 and Lys-95. Catalysis depends on Lys-107, which acts as the Proton donor. NAD(+)-binding residues include Thr-191 and Asn-222. Residue Ser-355 coordinates substrate.

The protein belongs to the Glu/Leu/Phe/Val dehydrogenases family. As to quaternary structure, homohexamer.

It carries out the reaction L-glutamate + NAD(+) + H2O = 2-oxoglutarate + NH4(+) + NADH + H(+). The protein is NAD-specific glutamate dehydrogenase (gluD) of Clostridioides difficile (Peptoclostridium difficile).